The following is a 312-amino-acid chain: Glutaminase (312 aa).

Substrate-binding residues include Ser-67, Asn-118, Glu-162, Asn-169, Tyr-193, Tyr-245, and Val-263.

The protein belongs to the glutaminase family. As to quaternary structure, homotetramer.

It carries out the reaction L-glutamine + H2O = L-glutamate + NH4(+). The sequence is that of Glutaminase from Bordetella avium (strain 197N).